The sequence spans 315 residues: Methionyl-tRNA formyltransferase (315 aa).

113–116 (SLLP) serves as a coordination point for (6S)-5,6,7,8-tetrahydrofolate.

Belongs to the Fmt family.

It catalyses the reaction L-methionyl-tRNA(fMet) + (6R)-10-formyltetrahydrofolate = N-formyl-L-methionyl-tRNA(fMet) + (6S)-5,6,7,8-tetrahydrofolate + H(+). In terms of biological role, attaches a formyl group to the free amino group of methionyl-tRNA(fMet). The formyl group appears to play a dual role in the initiator identity of N-formylmethionyl-tRNA by promoting its recognition by IF2 and preventing the misappropriation of this tRNA by the elongation apparatus. The protein is Methionyl-tRNA formyltransferase of Pseudoalteromonas atlantica (strain T6c / ATCC BAA-1087).